Reading from the N-terminus, the 240-residue chain is ATP-dependent Clp protease proteolytic subunit 2 (240 aa).

Catalysis depends on serine 132, which acts as the Nucleophile. Histidine 157 is an active-site residue.

The protein belongs to the peptidase S14 family. Fourteen ClpP subunits assemble into 2 heptameric rings which stack back to back to give a disk-like structure with a central cavity, resembling the structure of eukaryotic proteasomes.

It localises to the cytoplasm. It catalyses the reaction Hydrolysis of proteins to small peptides in the presence of ATP and magnesium. alpha-casein is the usual test substrate. In the absence of ATP, only oligopeptides shorter than five residues are hydrolyzed (such as succinyl-Leu-Tyr-|-NHMec, and Leu-Tyr-Leu-|-Tyr-Trp, in which cleavage of the -Tyr-|-Leu- and -Tyr-|-Trp bonds also occurs).. Cleaves peptides in various proteins in a process that requires ATP hydrolysis. Has a chymotrypsin-like activity. Plays a major role in the degradation of misfolded proteins. The polypeptide is ATP-dependent Clp protease proteolytic subunit 2 (Synechococcus elongatus (strain ATCC 33912 / PCC 7942 / FACHB-805) (Anacystis nidulans R2)).